A 139-amino-acid chain; its full sequence is ATP synthase epsilon chain (139 aa).

Belongs to the ATPase epsilon chain family. In terms of assembly, F-type ATPases have 2 components, CF(1) - the catalytic core - and CF(0) - the membrane proton channel. CF(1) has five subunits: alpha(3), beta(3), gamma(1), delta(1), epsilon(1). CF(0) has three main subunits: a, b and c.

It is found in the cell inner membrane. Its function is as follows. Produces ATP from ADP in the presence of a proton gradient across the membrane. The protein is ATP synthase epsilon chain of Pseudomonas putida (strain GB-1).